A 352-amino-acid chain; its full sequence is MTIQEIRQYLTQFFDPVELVGEGDAVIAGPAKIESAARGEVSFIANEKYLRYLSLTSASLVIVHRSVDVSLYAGERSFLKVSDPYTAFVFVLQKFARPRTLAKPGVAPTAAIGGGVSLGEGVAVGEHAVIGDRCSIGAGTVIAPNAVIMHDVKIGEGCTIFPQVTIYDGTLIGDRVVIHAGSVIGADGFGFAPQPDGSYVKIPQMGVVEIGDDAEIGANATIDRATMGSTVIAKGVKVDNLVQVAHNCRIGEHTVIAAQAGISGSTIMGRGCMIGGQAGFAGHLELADRTHVAAQAGVSKSFLEPGTALRGYPAQPMREQLRHEAMLRHLGSMKEKIDRIDRELKEQGASRD.

His-246 functions as the Proton acceptor in the catalytic mechanism.

This sequence belongs to the transferase hexapeptide repeat family. LpxD subfamily. As to quaternary structure, homotrimer.

It carries out the reaction a UDP-3-O-[(3R)-3-hydroxyacyl]-alpha-D-glucosamine + a (3R)-hydroxyacyl-[ACP] = a UDP-2-N,3-O-bis[(3R)-3-hydroxyacyl]-alpha-D-glucosamine + holo-[ACP] + H(+). The protein operates within bacterial outer membrane biogenesis; LPS lipid A biosynthesis. Its function is as follows. Catalyzes the N-acylation of UDP-3-O-acylglucosamine using 3-hydroxyacyl-ACP as the acyl donor. Is involved in the biosynthesis of lipid A, a phosphorylated glycolipid that anchors the lipopolysaccharide to the outer membrane of the cell. The chain is UDP-3-O-acylglucosamine N-acyltransferase from Chlorobium luteolum (strain DSM 273 / BCRC 81028 / 2530) (Pelodictyon luteolum).